The following is a 228-amino-acid chain: Probable octanoyltransferase (228 aa).

Residues Ser-27–Val-198 enclose the BPL/LPL catalytic domain. Substrate-binding positions include Arg-65 to His-72, Ser-129 to Gly-131, and Gly-142 to Ala-144. Residue Cys-160 is the Acyl-thioester intermediate of the active site.

It belongs to the LipB family.

The protein resides in the cytoplasm. The catalysed reaction is octanoyl-[ACP] + L-lysyl-[protein] = N(6)-octanoyl-L-lysyl-[protein] + holo-[ACP] + H(+). It participates in protein modification; protein lipoylation via endogenous pathway; protein N(6)-(lipoyl)lysine from octanoyl-[acyl-carrier-protein]: step 1/2. Catalyzes the transfer of endogenously produced octanoic acid from octanoyl-acyl-carrier-protein onto the lipoyl domains of lipoate-dependent enzymes. Lipoyl-ACP can also act as a substrate although octanoyl-ACP is likely to be the physiological substrate. The polypeptide is Probable octanoyltransferase (Pyrobaculum calidifontis (strain DSM 21063 / JCM 11548 / VA1)).